The chain runs to 280 residues: NAD(+) hydrolase TirS (280 aa).

Residues methionine 22–arginine 94 adopt a coiled-coil conformation. In terms of domain architecture, TIR spans isoleucine 141–isoleucine 275. Residues serine 150–serine 151 and glutamate 180 each bind NAD(+). The active site involves glutamate 216.

Its subcellular location is the secreted. It carries out the reaction NAD(+) + H2O = ADP-D-ribose + nicotinamide + H(+). It catalyses the reaction NADP(+) + H2O = ADP-D-ribose 2'-phosphate + nicotinamide + H(+). In terms of biological role, virulence factor that suppresses host Toll-like receptor 2 (TLR2)-mediated NF-kappa-B signaling upon infection. NAD(+) hydrolase (NADase) that catalyzes cleavage of NAD(+) into ADP-D-ribose (ADPR) and nicotinamide. Also able to hydrolyze NADP(+), but not other NAD(+)-related molecules. Able to reduce NAD(+) levels in host cells. The protein is NAD(+) hydrolase TirS of Staphylococcus aureus (strain MSSA476).